We begin with the raw amino-acid sequence, 515 residues long: 2-isopropylmalate synthase (515 aa).

Positions 5–268 (VIIFDTTLRD…VCGIDASQIV (264 aa)) constitute a Pyruvate carboxyltransferase domain. 4 residues coordinate Mn(2+): D14, H202, H204, and N239. A regulatory domain region spans residues 394–515 (HFISLSQHSE…QAKLNAQMAP (122 aa)).

The protein belongs to the alpha-IPM synthase/homocitrate synthase family. LeuA type 1 subfamily. Homodimer. The cofactor is Mn(2+).

It localises to the cytoplasm. The enzyme catalyses 3-methyl-2-oxobutanoate + acetyl-CoA + H2O = (2S)-2-isopropylmalate + CoA + H(+). It functions in the pathway amino-acid biosynthesis; L-leucine biosynthesis; L-leucine from 3-methyl-2-oxobutanoate: step 1/4. In terms of biological role, catalyzes the condensation of the acetyl group of acetyl-CoA with 3-methyl-2-oxobutanoate (2-ketoisovalerate) to form 3-carboxy-3-hydroxy-4-methylpentanoate (2-isopropylmalate). This Polynucleobacter asymbioticus (strain DSM 18221 / CIP 109841 / QLW-P1DMWA-1) (Polynucleobacter necessarius subsp. asymbioticus) protein is 2-isopropylmalate synthase.